We begin with the raw amino-acid sequence, 115 residues long: NADH-ubiquinone oxidoreductase chain 3 (115 aa).

A run of 3 helical transmembrane segments spans residues 4–24 (LTAL…AFWL), 55–75 (FFLV…LLPL), and 86–106 (VMML…AYEW).

The protein belongs to the complex I subunit 3 family. In terms of assembly, core subunit of respiratory chain NADH dehydrogenase (Complex I) which is composed of 45 different subunits. Interacts with TMEM186. Interacts with TMEM242.

It is found in the mitochondrion inner membrane. It carries out the reaction a ubiquinone + NADH + 5 H(+)(in) = a ubiquinol + NAD(+) + 4 H(+)(out). Functionally, core subunit of the mitochondrial membrane respiratory chain NADH dehydrogenase (Complex I) which catalyzes electron transfer from NADH through the respiratory chain, using ubiquinone as an electron acceptor. Essential for the catalytic activity of complex I. This Isthmomys pirrensis (Mount Pirri Isthmus rat) protein is NADH-ubiquinone oxidoreductase chain 3.